A 207-amino-acid polypeptide reads, in one-letter code: Large ribosomal subunit protein uL4 (207 aa).

The tract at residues 49–78 is disordered; that stretch reads HAVKNRSAVSGGGRKPWRQKGTGRARQGSI.

The protein belongs to the universal ribosomal protein uL4 family. As to quaternary structure, part of the 50S ribosomal subunit.

Functionally, one of the primary rRNA binding proteins, this protein initially binds near the 5'-end of the 23S rRNA. It is important during the early stages of 50S assembly. It makes multiple contacts with different domains of the 23S rRNA in the assembled 50S subunit and ribosome. Forms part of the polypeptide exit tunnel. The polypeptide is Large ribosomal subunit protein uL4 (Streptococcus pneumoniae serotype 2 (strain D39 / NCTC 7466)).